Consider the following 154-residue polypeptide: Putative pre-16S rRNA nuclease (154 aa).

Belongs to the YqgF nuclease family.

The protein localises to the cytoplasm. Functionally, could be a nuclease involved in processing of the 5'-end of pre-16S rRNA. This Rickettsia canadensis (strain McKiel) protein is Putative pre-16S rRNA nuclease.